The chain runs to 375 residues: Trichodiene synthase (375 aa).

It belongs to the trichodiene synthase family.

The enzyme catalyses (2E,6E)-farnesyl diphosphate = trichodiene + diphosphate. Its pathway is sesquiterpene biosynthesis; trichothecene biosynthesis. Its function is as follows. TS is a member of the terpene cyclase group of enzymes. It catalyzes the isomerization and cyclization of farnesyl pyro-phosphate to form trichodiene, the first cyclic intermediate in the biosynthetic pathway for trichothecenes. It serves to branch trichothecene biosynthesis from the isoprenoid pathway. This is Trichodiene synthase (TRI5) from Fusarium austroamericanum.